The following is a 135-amino-acid chain: Large ribosomal subunit protein uL16c (135 aa).

This sequence belongs to the universal ribosomal protein uL16 family. Part of the 50S ribosomal subunit.

It localises to the plastid. The protein resides in the chloroplast. This Phaseolus vulgaris (Kidney bean) protein is Large ribosomal subunit protein uL16c.